The primary structure comprises 358 residues: 3'(2'),5'-bisphosphate nucleotidase (358 aa).

D52 (proton acceptor) is an active-site residue. Residues E78, D140, I142, and D143 each coordinate Mg(2+). Catalysis depends on T145, which acts as the Proton acceptor. Residues T145, H239, S263, K266, R280, and D292 each contribute to the adenosine 3',5'-bisphosphate site. 5 residues coordinate AMP: H239, S263, K266, R280, and D292. Residue D292 participates in Mg(2+) binding.

Belongs to the inositol monophosphatase superfamily. The cofactor is Mg(2+). In terms of tissue distribution, is constitutively transcribed in both roots and shoots.

The catalysed reaction is 3'-phosphoadenylyl sulfate + H2O = adenosine 5'-phosphosulfate + phosphate. The enzyme catalyses adenosine 3',5'-bisphosphate + H2O = AMP + phosphate. It catalyses the reaction adenosine 2',5'-bisphosphate + H2O = AMP + phosphate. Inhibited by Ca(2+), Li(+), and Na(+) and activated by K(+). Functionally, phosphatase that converts adenosine 3'-phosphate 5'-phosphosulfate (PAPS) to adenosine 5'-phosphosulfate (APS) and 3'(2')-phosphoadenosine 5'-phosphate (PAP) to AMP. May regulate the flux of sulfur in the sulfur-activation pathway by converting PAPS to APS. Shows no activity on myo-inositol 1-phosphate, beta-glycerol phosphate, NADPH, NADP and 5'-AMP. This Oryza sativa (Rice) protein is 3'(2'),5'-bisphosphate nucleotidase.